The sequence spans 2227 residues: Genome polyprotein (2227 aa).

2 short sequence motifs ((L)YPX(n)L motif) span residues 167 to 171 (YPHGL) and 200 to 205 (YPVWEL). Residues 766–836 (MMSRIAAGDL…PRKMKGVFSQ (71 aa)) form an involved in P1-2A pentamerization region. Residues 1011 to 1031 (TVEIINTVLCFVKSGILLYVI) form a helical membrane-spanning segment. Positions 1043–1070 (IGLLRVMNYVDIGCSVISCGKVFSKMLE) are membrane-penetrating ability. A coiled-coil region spans residues 1127-1155 (KKKDVLNILKDNRQKIEKAIEEADNLCIL). The region spanning 1204 to 1366 (HQKLKNLGSI…SFFKNPHNDM (163 aa)) is the SF3 helicase domain. 1230–1237 (GKRGGGKS) lines the ATP pocket. The helical transmembrane segment at 1462–1482 (WVAVGAAVGILGVLVAGWFVY) threads the bilayer. Tyrosine 1499 is modified (O-(5'-phospho-RNA)-tyrosine). The 215-residue stretch at 1514 to 1728 (DPVESQSPLE…VAKLVTQEMF (215 aa)) folds into the Peptidase C3 domain. Catalysis depends on for protease 3C activity residues histidine 1563, aspartate 1603, and cysteine 1691. Residues 1976–2097 (DVGLDLDFSA…VFSRDVQIDN (122 aa)) enclose the RdRp catalytic domain.

The protein belongs to the picornaviridae polyprotein family. As to quaternary structure, homodimer. Homomultimer; probably interacts with membranes in a multimeric form. Seems to assemble into amyloid-like fibers. In terms of assembly, homodimer. Monomer. Interacts with protein 3CD. Interacts with host ACBD3. As to quaternary structure, interacts with protein 3AB. In terms of assembly, interacts with human MAVS. Homodimer; disulfide-linked. As to quaternary structure, homopentamer. Homooligomer. In terms of assembly, interacts with capsid protein VP2. Interacts with capsid protein VP3. Interacts with capsid protein VP1. Interacts with capsid protein VP3. As to quaternary structure, interacts with capsid protein VP1. Interacts with capsid protein VP2. Specific enzymatic cleavages by viral protease in vivo yield a variety of precursors and mature proteins. Polyprotein processing intermediates are produced, such as P1-2A which is a functional precursor of the structural proteins, VP0 which is a VP4-VP2 precursor, VP1-2A precursor, 3ABC precursor which is a stable and catalytically active precursor of 3A, 3B and 3C proteins, 3AB and 3CD precursors. The assembly signal 2A is removed from VP1-2A by a host protease, possibly host Cathepsin L. This cleavage occurs over a region of 3 amino-acids probably generating VP1 proteins with heterogeneous C-termini. In terms of processing, during virion maturation, immature virions are rendered infectious following cleavage of VP0 into VP4 and VP2. This maturation seems to be an autocatalytic event triggered by the presence of RNA in the capsid and is followed by a conformational change of the particle. Post-translationally, the assembly signal 2A is removed from VP1-2A by a host protease, possibly host Cathepsin L in naked virions. This cleavage does not occur in enveloped virions. This cleavage occurs over a region of 3 amino-acids probably generating VP1 proteins with heterogeneous C-termini. VPg is uridylylated prior to priming replication into VPg-pUpU. In terms of processing, unlike other picornaviruses, does not seem to be myristoylated.

Its subcellular location is the virion. It localises to the host endosome. The protein resides in the host multivesicular body. It is found in the host membrane. The protein localises to the host mitochondrion outer membrane. Its subcellular location is the host cytoplasm. It localises to the host cytoplasmic vesicle membrane. It carries out the reaction RNA(n) + a ribonucleoside 5'-triphosphate = RNA(n+1) + diphosphate. The enzyme catalyses a ribonucleoside 5'-triphosphate + H2O = a ribonucleoside 5'-diphosphate + phosphate + H(+). It catalyses the reaction Selective cleavage of Gln-|-Gly bond in the poliovirus polyprotein. In other picornavirus reactions Glu may be substituted for Gln, and Ser or Thr for Gly.. In terms of biological role, capsid proteins VP1, VP2, and VP3 form a closed capsid enclosing the viral positive strand RNA genome. All these proteins contain a beta-sheet structure called beta-barrel jelly roll. Together they form an icosahedral capsid (T=3) composed of 60 copies of each VP1, VP2, and VP3, with a diameter of approximately 300 Angstroms. VP1 is situated at the 12 fivefold axes, whereas VP2 and VP3 are located at the quasi-sixfold axes. The naked capsid interacts with the host receptor HAVCR1 to provide virion attachment to and probably entry into the target cell. VP0 precursor is a component of the immature procapsids. Its function is as follows. Plays a role in the assembly of the 12 pentamers into an icosahedral structure. Has not been detected in mature virions, supposedly owing to its small size. Functionally, precursor component of immature procapsids that corresponds to an extended form of the structural protein VP1. After maturation, possibly by the host Cathepsin L, the assembly signal 2A is cleaved to give rise to the mature VP1 protein. In terms of biological role, functions as a viroporin. Affects membrane integrity and causes an increase in membrane permeability. Involved in host intracellular membrane rearrangements probably to give rise to the viral factories. Does not disrupt calcium homeostasis or glycoprotein trafficking. Antagonizes the innate immune response of the host by suppressing IFN-beta synthesis, which it achieves by interfering with the RIG-I/IFIH1 pathway. Affects membrane integrity and causes an increase in membrane permeability. Its function is as follows. Associates with and induces structural rearrangements of intracellular membranes. Displays RNA-binding activity. Functionally, the precursor 3ABC is targeted to the mitochondrial membrane where protease 3C activity cleaves and inhibits the host antiviral protein MAVS, thereby disrupting activation of IRF3 through the IFIH1/MDA5 pathway. In vivo, the protease activity of 3ABC precursor is more efficient in cleaving the 2BC precursor than that of protein 3C. The 3ABC precursor may therefore play a role in the proteolytic processing of the polyprotein. Possible viroporin. In terms of biological role, interacts with the 3CD precursor and with RNA structures found at both the 5'- and 3'-termini of the viral genome. Since the 3AB precursor contains the hydrophobic domain 3A, it probably anchors the whole viral replicase complex to intracellular membranes on which viral RNA synthesis occurs. May serve as membrane anchor to the 3AB and 3ABC precursors via its hydrophobic domain. May interact with RNA. Its function is as follows. Acts as a primer for viral RNA replication and remains covalently bound to viral genomic RNA. VPg is uridylylated prior to priming replication into VPg-pUpU. The VPg-pUpU is then used as primer on the genomic RNA poly(A) by the RNA-dependent RNA polymerase to replicate the viral genome. Functionally, cysteine protease that generates mature viral proteins from the precursor polyprotein. In addition to its proteolytic activity, it binds to viral RNA, and thus influences viral genome replication. RNA and substrate bind cooperatively to the protease. Cleaves IKBKG/NEMO to impair innate immune signaling. Cleaves host PABPC1 which may participate in the switch of viral translation to RNA synthesis. In terms of biological role, interacts with the 3AB precursor and with RNA structures found at both the 5'- and 3'-termini of the viral genome. Disrupts TLR3 signaling by degrading the host adapter protein TICAM1/TRIF. RNA-directed RNA polymerase 3D-POL replicates genomic and antigenomic RNA by recognizing replications specific signals. This chain is Genome polyprotein, found in Homo sapiens (Human).